Consider the following 167-residue polypeptide: Ureidoglycolate lyase (167 aa).

This sequence belongs to the ureidoglycolate lyase family. As to quaternary structure, homodimer. Requires Ni(2+) as cofactor.

The enzyme catalyses (S)-ureidoglycolate = urea + glyoxylate. The protein operates within nitrogen metabolism; (S)-allantoin degradation. Functionally, catalyzes the catabolism of the allantoin degradation intermediate (S)-ureidoglycolate, generating urea and glyoxylate. Involved in the utilization of allantoin as nitrogen source. The protein is Ureidoglycolate lyase of Pseudomonas fluorescens (strain SBW25).